A 203-amino-acid chain; its full sequence is uncharacterized protein (203 aa).

This is an uncharacterized protein from Chlorobium limicola.